The chain runs to 692 residues: Meiotic sister-chromatid recombination protein 6, mitochondrial (692 aa).

The N-terminal 30 residues, 1-30 (MLSHNALRAFDCSKVIISRRCLTSSTSIYQ), are a transit peptide targeting the mitochondrion.

The protein localises to the mitochondrion. Its function is as follows. May be involved in the control of meiotic sister-chromatid recombination. The chain is Meiotic sister-chromatid recombination protein 6, mitochondrial (MSC6) from Saccharomyces cerevisiae (strain ATCC 204508 / S288c) (Baker's yeast).